A 203-amino-acid chain; its full sequence is Outer-membrane lipoprotein carrier protein (203 aa).

The N-terminal stretch at 1-21 (MKKMAIACALLSSVVASSVWA) is a signal peptide. The segment at 178–203 (QQNGAVEPSKFTFTPPQGVTIDDQRK) is disordered.

The protein belongs to the LolA family. Monomer.

Its subcellular location is the periplasm. In terms of biological role, participates in the translocation of lipoproteins from the inner membrane to the outer membrane. Only forms a complex with a lipoprotein if the residue after the N-terminal Cys is not an aspartate (The Asp acts as a targeting signal to indicate that the lipoprotein should stay in the inner membrane). This Salmonella typhi protein is Outer-membrane lipoprotein carrier protein.